A 333-amino-acid polypeptide reads, in one-letter code: Taste receptor type 2 member 110 (333 aa).

Topologically, residues 1-13 are extracellular; sequence MFSQIISTSDIFT. Residues 14-34 form a helical membrane-spanning segment; it reads FTIILFVELVIGILGNGFIAL. The Cytoplasmic portion of the chain corresponds to 35-60; sequence VNIMDWTKRRSISSADQILTALAITR. Residues 61 to 81 traverse the membrane as a helical segment; sequence FLYVWFMIICILLFMLCPHLL. Residues 82 to 89 are Extracellular-facing; the sequence is TRSEIVTS. The helical transmembrane segment at 90-110 threads the bilayer; sequence IGIIWIVNNHFSVWLATCLGV. Topologically, residues 111 to 133 are cytoplasmic; the sequence is FYFLKIANFSNSLFLYLKWRVKK. The helical transmembrane segment at 134–154 threads the bilayer; it reads VVLMIIQVSMIFLILNLLSLS. Residues 155 to 205 lie on the Extracellular side of the membrane; the sequence is MYDQFSIDVYEGNTSYNLGDSTPFPTISLFINSSKVFVITNSSHIFLPINS. N-linked (GlcNAc...) asparagine glycans are attached at residues asparagine 186 and asparagine 195. The chain crosses the membrane as a helical span at residues 206-226; sequence LFMLIPFTVSLVAFLMLIFSL. The Cytoplasmic portion of the chain corresponds to 227 to 255; it reads WKHHKKMQVNAKPPRDASTMAHIKALQTG. The chain crosses the membrane as a helical span at residues 256–276; the sequence is FSFLLLYAVYLLFIVIGMLSL. Over 277 to 283 the chain is Extracellular; it reads RLIGGKL. Residues 284–304 traverse the membrane as a helical segment; sequence ILLFDHISGIGFPISHSFVLI. The Cytoplasmic segment spans residues 305 to 333; it reads LGNNKLRQASLSVLHCLRCRSKDMDTMGP.

It belongs to the G-protein coupled receptor T2R family.

The protein resides in the membrane. Gustducin-coupled receptor implicated in the perception of bitter compounds in the oral cavity and the gastrointestinal tract. Signals through PLCB2 and the calcium-regulated cation channel TRPM5. The sequence is that of Taste receptor type 2 member 110 from Mus musculus (Mouse).